An 863-amino-acid polypeptide reads, in one-letter code: Protein translocase subunit SecA (863 aa).

ATP contacts are provided by residues Gln-88, 106–110 (GEGKT), and Asp-496. Positions 818–842 (EVKTEPVITKKKPARNEPCPCGSGK) are disordered. 4 residues coordinate Zn(2+): Cys-836, Cys-838, Cys-847, and Cys-848.

Belongs to the SecA family. As to quaternary structure, monomer and homodimer. Part of the essential Sec protein translocation apparatus which comprises SecA, SecYEG and auxiliary proteins SecDF-YajC and YidC. The cofactor is Zn(2+).

Its subcellular location is the cell inner membrane. It is found in the cytoplasm. It catalyses the reaction ATP + H2O + cellular proteinSide 1 = ADP + phosphate + cellular proteinSide 2.. Part of the Sec protein translocase complex. Interacts with the SecYEG preprotein conducting channel. Has a central role in coupling the hydrolysis of ATP to the transfer of proteins into and across the cell membrane, serving as an ATP-driven molecular motor driving the stepwise translocation of polypeptide chains across the membrane. The chain is Protein translocase subunit SecA from Nitratiruptor sp. (strain SB155-2).